Here is a 339-residue protein sequence, read N- to C-terminus: Methylcobamide:CoM methyltransferase MtaA (339 aa).

Positions 237, 239, and 316 each coordinate Zn(2+).

This sequence belongs to the uroporphyrinogen decarboxylase family. MtbA/mtaA subfamily. Zn(2+) serves as cofactor.

The catalysed reaction is methyl-Co(III)-[methanol-specific corrinoid protein] + coenzyme M = Co(I)-[methanol-specific corrinoid protein] + methyl-coenzyme M + H(+). Methyltransferase involved in methanogenesis in the methanol pathway. Catalyzes the transfer of the methyl group from the methylated corrinoid protein MtaC to coenzyme M, forming the substrate for coenzyme-B sulfoethylthiotransferase. MtaC can be substituted by free cob(I)alamin in vitro. This is Methylcobamide:CoM methyltransferase MtaA (mtaA) from Methanosarcina barkeri (strain Fusaro / DSM 804).